The chain runs to 568 residues: MSVVVTRYRGGGPQYMNASSTSPKPVVGEPSIRTHALHALAYCERLFYLEEVEELRVADAAVFAGRRLHVQLQEEGEHVELELASEALGLHGRVDAVKTREGTLVVYEHKRGRHAPGGDAPEAWPSDRLQAGAYALLVEERFPGAPVECRVRYHQTDTTVRFPLDAALRGAVVAAVARARLLRASRERPPVTQEERKCAKCSLAPVCLPEEERQVVGEERPRLFPEDDVRQVLHVATPGTRVGRAAEELVVTPPEGEGAPSRQPGRMVSALIAHGAVQVSAQALAYCVENDIGVHWFTSGGRYLGGLGGGAGNVHRRLRQFEALRQASVCLGLARRLVAAKLEGQLRFLLRASRGDSESRQVLASAVRDLRALLPKCEEAPSLEVLLGLEGAGAARYFGALPYLQGEDVDTRLRFEGRNRRPPRDRFNAVLGFLFGLVHREVEAAIRAVGLDVAFGFYHQPRGTAGPLGLDVMELFRVPLADMPLVASVNRRAWDADADFEVTSEHVWLSKAGRAKAIELYERRKRETWKNNVLGYSLSYARLVELEVRLLEKEWTGKPGLFATFRLR.

Positions 1-209 are CRISPR-associated exonuclease Cas4; it reads MSVVVTRYRG…KCSLAPVCLP (209 aa). Cysteine 43 serves as a coordination point for [4Fe-4S] cluster. Residues aspartate 95 and glutamate 108 each contribute to the Mn(2+) site. [4Fe-4S] cluster contacts are provided by cysteine 198, cysteine 201, and cysteine 207. The segment at 232–568 is CRISPR-associated endonuclease Cas1; the sequence is VLHVATPGTR…PGLFATFRLR (337 aa). Mn(2+) is bound by residues glutamate 390, histidine 459, and glutamate 474.

It in the N-terminal section; belongs to the CRISPR-associated exonuclease Cas4 family. The protein in the C-terminal section; belongs to the CRISPR-associated endonuclease Cas1 family. In terms of assembly, homodimer, forms a heterotetramer with a Cas2 homodimer. It depends on [4Fe-4S] cluster as a cofactor. Mg(2+) is required as a cofactor. The cofactor is Mn(2+).

The catalysed reaction is exonucleolytic cleavage in the 5'- to 3'-direction to yield nucleoside 3'-phosphates.. In terms of biological role, CRISPR (clustered regularly interspaced short palindromic repeat), is an adaptive immune system that provides protection against mobile genetic elements (viruses, transposable elements and conjugative plasmids). CRISPR clusters contain spacers, sequences complementary to antecedent mobile elements, and target invading nucleic acids. CRISPR clusters are transcribed and processed into CRISPR RNA (crRNA). The Cas4 region acts as a ssDNA exonuclease, while the Cas1 region acts as a dsDNA endonuclease. Involved in the integration of spacer DNA into the CRISPR cassette. The chain is CRISPR-associated exonuclease Cas4/endonuclease Cas1 fusion (cas4-cas1) from Myxococcus xanthus (strain DK1622).